A 633-amino-acid polypeptide reads, in one-letter code: Phosphomethylpyrimidine synthase (633 aa).

Substrate is bound by residues asparagine 245, methionine 274, tyrosine 303, histidine 339, 359–361 (SRG), 400–403 (DGLR), and glutamate 439. A Zn(2+)-binding site is contributed by histidine 443. Tyrosine 466 provides a ligand contact to substrate. Histidine 507 is a binding site for Zn(2+). Residues cysteine 587, cysteine 590, and cysteine 595 each contribute to the [4Fe-4S] cluster site.

Belongs to the ThiC family. As to quaternary structure, homodimer. [4Fe-4S] cluster is required as a cofactor.

It carries out the reaction 5-amino-1-(5-phospho-beta-D-ribosyl)imidazole + S-adenosyl-L-methionine = 4-amino-2-methyl-5-(phosphooxymethyl)pyrimidine + CO + 5'-deoxyadenosine + formate + L-methionine + 3 H(+). It functions in the pathway cofactor biosynthesis; thiamine diphosphate biosynthesis. In terms of biological role, catalyzes the synthesis of the hydroxymethylpyrimidine phosphate (HMP-P) moiety of thiamine from aminoimidazole ribotide (AIR) in a radical S-adenosyl-L-methionine (SAM)-dependent reaction. This Neisseria meningitidis serogroup C / serotype 2a (strain ATCC 700532 / DSM 15464 / FAM18) protein is Phosphomethylpyrimidine synthase.